Here is a 198-residue protein sequence, read N- to C-terminus: Nucleoid occlusion factor SlmA (198 aa).

An HTH tetR-type domain is found at 9–70 (RNRREEILQA…SLIEFIEDTL (62 aa)). The H-T-H motif DNA-binding region spans 33–52 (TTAKLAANVGVSEAALYRHF). Positions 117 to 144 (EQDRLQGRINQLFERIEAQLRQVLKERR) form a coiled coil.

The protein belongs to the nucleoid occlusion factor SlmA family. In terms of assembly, homodimer. Interacts with FtsZ.

It localises to the cytoplasm. The protein localises to the nucleoid. Its function is as follows. Required for nucleoid occlusion (NO) phenomenon, which prevents Z-ring formation and cell division over the nucleoid. Acts as a DNA-associated cell division inhibitor that binds simultaneously chromosomal DNA and FtsZ, and disrupts the assembly of FtsZ polymers. SlmA-DNA-binding sequences (SBS) are dispersed on non-Ter regions of the chromosome, preventing FtsZ polymerization at these regions. The chain is Nucleoid occlusion factor SlmA from Edwardsiella ictaluri (strain 93-146).